A 230-amino-acid chain; its full sequence is Lipoprotein-releasing system ATP-binding protein LolD (230 aa).

The ABC transporter domain maps to 6 to 230 (LQASNLEKEY…GHFILPSETL (225 aa)). Residue 42–49 (GSSGSGKS) participates in ATP binding.

The protein belongs to the ABC transporter superfamily. Lipoprotein translocase (TC 3.A.1.125) family. As to quaternary structure, the complex is composed of two ATP-binding proteins (LolD) and two transmembrane proteins (LolC and LolE).

The protein localises to the cell inner membrane. In terms of biological role, part of the ABC transporter complex LolCDE involved in the translocation of mature outer membrane-directed lipoproteins, from the inner membrane to the periplasmic chaperone, LolA. Responsible for the formation of the LolA-lipoprotein complex in an ATP-dependent manner. The polypeptide is Lipoprotein-releasing system ATP-binding protein LolD (Hydrogenovibrio crunogenus (strain DSM 25203 / XCL-2) (Thiomicrospira crunogena)).